A 135-amino-acid chain; its full sequence is L-ectoine synthase (135 aa).

Belongs to the ectoine synthase family.

The enzyme catalyses (2S)-4-acetamido-2-aminobutanoate = L-ectoine + H2O. It participates in amine and polyamine biosynthesis; ectoine biosynthesis; L-ectoine from L-aspartate 4-semialdehyde: step 3/3. Functionally, catalyzes the circularization of gamma-N-acetyl-alpha,gamma-diaminobutyric acid (ADABA) to ectoine (1,4,5,6-tetrahydro-2-methyl-4-pyrimidine carboxylic acid), which is an excellent osmoprotectant. The sequence is that of L-ectoine synthase from Hyphomonas neptunium (strain ATCC 15444).